We begin with the raw amino-acid sequence, 179 residues long: Nucleoside-triphosphatase THEP1 (179 aa).

Residues 7–14 (GMPGVGKT) and 98–105 (IIIIDEIG) contribute to the ATP site.

The protein belongs to the THEP1 NTPase family.

The catalysed reaction is a ribonucleoside 5'-triphosphate + H2O = a ribonucleoside 5'-diphosphate + phosphate + H(+). In terms of biological role, has nucleotide phosphatase activity towards ATP, GTP, CTP, TTP and UTP. May hydrolyze nucleoside diphosphates with lower efficiency. This Pyrococcus abyssi (strain GE5 / Orsay) protein is Nucleoside-triphosphatase THEP1.